The primary structure comprises 227 residues: Probable septum site-determining protein MinC (227 aa).

It belongs to the MinC family. In terms of assembly, interacts with MinD and FtsZ.

Functionally, cell division inhibitor that blocks the formation of polar Z ring septums. Rapidly oscillates between the poles of the cell to destabilize FtsZ filaments that have formed before they mature into polar Z rings. Prevents FtsZ polymerization. The polypeptide is Probable septum site-determining protein MinC (Laribacter hongkongensis (strain HLHK9)).